Consider the following 394-residue polypeptide: uncharacterized protein (394 aa).

This is an uncharacterized protein from Bacillus subtilis (strain 168).